The following is a 152-amino-acid chain: Lipoprotein signal peptidase (152 aa).

Helical transmembrane passes span 55 to 75 and 85 to 105; these read NKMWFFYIITVVFVVFIVFYM and LGISLGLILGGAMGNFIDRVF. Catalysis depends on residues Asp111 and Asp129. The chain crosses the membrane as a helical span at residues 124-144; the sequence is VFNIADSALCIGVVLIIIQTL.

It belongs to the peptidase A8 family.

It is found in the cell membrane. It catalyses the reaction Release of signal peptides from bacterial membrane prolipoproteins. Hydrolyzes -Xaa-Yaa-Zaa-|-(S,diacylglyceryl)Cys-, in which Xaa is hydrophobic (preferably Leu), and Yaa (Ala or Ser) and Zaa (Gly or Ala) have small, neutral side chains.. The protein operates within protein modification; lipoprotein biosynthesis (signal peptide cleavage). In terms of biological role, this protein specifically catalyzes the removal of signal peptides from prolipoproteins. The protein is Lipoprotein signal peptidase of Bacillus cereus (strain B4264).